Consider the following 258-residue polypeptide: Undecaprenyl-diphosphatase (258 aa).

The next 8 membrane-spanning stretches (helical) occupy residues 1 to 21, 42 to 62, 69 to 89, 96 to 116, 135 to 155, 173 to 193, 211 to 231, and 237 to 257; these read MDFL…FLPV, LKCF…FMFF, FNLW…GFLA, FFEP…FIVV, VSFK…IPGT, EVAA…ATAY, IFLV…KLFL, and FSYI…LIYI.

It belongs to the UppP family.

It localises to the cell inner membrane. It carries out the reaction di-trans,octa-cis-undecaprenyl diphosphate + H2O = di-trans,octa-cis-undecaprenyl phosphate + phosphate + H(+). Its function is as follows. Catalyzes the dephosphorylation of undecaprenyl diphosphate (UPP). Confers resistance to bacitracin. The polypeptide is Undecaprenyl-diphosphatase (Campylobacter fetus subsp. fetus (strain 82-40)).